A 48-amino-acid chain; its full sequence is uncharacterized protein (48 aa).

The chain crosses the membrane as a helical span at residues 18–38; that stretch reads IIIKYWYIDLTITIFAFLILY.

The protein localises to the host membrane. This is an uncharacterized protein from Acidianus bottle-shaped virus (isolate Italy/Pozzuoli) (ABV).